A 93-amino-acid polypeptide reads, in one-letter code: MDGIKYAVFTEKSLRLLGKNQYTFNVESGFTKTEIKHWVELFFGVKVVAVNSHRLPGKGRRIGPILGHTMHYRRMIITLQPGYSIPLLDREKN.

This sequence belongs to the universal ribosomal protein uL23 family. As to quaternary structure, part of the 50S ribosomal subunit.

The protein localises to the plastid. Its subcellular location is the chloroplast. Its function is as follows. Binds to 23S rRNA. This Agrostis stolonifera (Creeping bentgrass) protein is Large ribosomal subunit protein uL23cy (rpl23-B).